The chain runs to 929 residues: Probable LRR receptor-like serine/threonine-protein kinase At1g67720 (929 aa).

Positions 1–21 (MGLCLAQLAVTCLFLVPFVLS) are cleaved as a signal peptide. Over 22-531 (QVTEFVSIDC…NEAQRKHFWQ (510 aa)) the chain is Extracellular. 7 N-linked (GlcNAc...) asparagine glycosylation sites follow: asparagine 36, asparagine 173, asparagine 236, asparagine 293, asparagine 320, asparagine 332, and asparagine 407. 4 LRR repeats span residues 413–437 (PPRV…INYM), 438–460 (EALT…MSKL), 461–484 (VNLK…LAHL), and 485–508 (PNLQ…LLKG). N-linked (GlcNAc...) asparagine glycosylation is present at asparagine 494. A helical membrane pass occupies residues 532–552 (ILGISIAAVAILLLLVGGSLV). Topologically, residues 553-929 (LLCALRKTKR…SRNSLAPAAR (377 aa)) are cytoplasmic. Positions 606-880 (DNFSKKVGRG…EVIVAIQDAI (275 aa)) constitute a Protein kinase domain. ATP contacts are provided by residues 612 to 620 (VGRGSFGSV) and lysine 634. Tyrosine 679 bears the Phosphotyrosine mark. The active-site Proton acceptor is aspartate 731. Phosphoserine is present on residues serine 735 and serine 764. Threonine 770 bears the Phosphothreonine mark. Tyrosine 778 bears the Phosphotyrosine mark.

The protein belongs to the protein kinase superfamily. Ser/Thr protein kinase family.

Its subcellular location is the membrane. It catalyses the reaction L-seryl-[protein] + ATP = O-phospho-L-seryl-[protein] + ADP + H(+). The catalysed reaction is L-threonyl-[protein] + ATP = O-phospho-L-threonyl-[protein] + ADP + H(+). The sequence is that of Probable LRR receptor-like serine/threonine-protein kinase At1g67720 from Arabidopsis thaliana (Mouse-ear cress).